The primary structure comprises 444 residues: Vacuolar protein sorting-associated protein 4B (444 aa).

The region spanning Thr-4–Lys-82 is the MIT domain. Residues Ala-19–Lys-82 are a coiled coil. Residues Asn-78–Lys-88 show a composition bias toward basic and acidic residues. Residues Asn-78 to Gln-117 are disordered. 3 positions are modified to phosphoserine: Ser-93, Ser-102, and Ser-108. Gly-174–Ser-181 provides a ligand contact to ATP. Ser-410 is modified (phosphoserine).

This sequence belongs to the AAA ATPase family. In terms of assembly, proposed to be monomeric or homodimeric in nucleotide-free form and to oligomerize upon binding to ATP to form two stacked hexameric or heptameric rings with a central pore through which ESCRT-III substrates are translocated in an ATP-dependent manner. In vitro, associates on the inside of a helical tubular structure formed by a CHMP2A-CHMP3 polymer. Interacts with CHMP1A, CHMP1B, CHMP2A, CHMP4B and CHMP6. Interacts with VPS4A; the interaction suggests a heteromeric assembly with VPS4A. Interacts with VTA1.

It localises to the late endosome membrane. The catalysed reaction is ATP + H2O = ADP + phosphate + H(+). Functionally, involved in late steps of the endosomal multivesicular bodies (MVB) pathway. Recognizes membrane-associated ESCRT-III assemblies and catalyzes their disassembly, possibly in combination with membrane fission. Redistributes the ESCRT-III components to the cytoplasm for further rounds of MVB sorting. MVBs contain intraluminal vesicles (ILVs) that are generated by invagination and scission from the limiting membrane of the endosome and mostly are delivered to lysosomes enabling degradation of membrane proteins, such as stimulated growth factor receptors, lysosomal enzymes and lipids. VPS4A/B are required for the exosomal release of SDCBP, CD63 and syndecan. (Microbial infection) In conjunction with the ESCRT machinery also appears to function in topologically equivalent membrane fission events, such as the terminal stages of cytokinesis and enveloped virus budding (lentiviruses). This chain is Vacuolar protein sorting-associated protein 4B (VPS4B), found in Pongo abelii (Sumatran orangutan).